We begin with the raw amino-acid sequence, 459 residues long: Ribulose bisphosphate carboxylase large chain (459 aa).

The propeptide occupies methionine 1 to serine 2. Position 3 is an N-acetylproline (proline 3). An N6,N6,N6-trimethyllysine modification is found at lysine 14. Substrate-binding residues include residue 123 and threonine 173. The active-site Proton acceptor is the lysine 175. Lysine 177 serves as a coordination point for substrate. Mg(2+) contacts are provided by lysine 201, aspartate 203, and glutamate 204. Lysine 201 carries the N6-carboxylysine modification. Catalysis depends on histidine 294, which acts as the Proton acceptor. 3 residues coordinate substrate: arginine 295, histidine 327, and serine 379.

It belongs to the RuBisCO large chain family. Type I subfamily. In terms of assembly, heterohexadecamer of 8 large chains and 8 small chains; disulfide-linked. The disulfide link is formed within the large subunit homodimers. Mg(2+) serves as cofactor. The disulfide bond which can form in the large chain dimeric partners within the hexadecamer appears to be associated with oxidative stress and protein turnover.

The protein localises to the plastid. It localises to the chloroplast. It carries out the reaction 2 (2R)-3-phosphoglycerate + 2 H(+) = D-ribulose 1,5-bisphosphate + CO2 + H2O. The enzyme catalyses D-ribulose 1,5-bisphosphate + O2 = 2-phosphoglycolate + (2R)-3-phosphoglycerate + 2 H(+). RuBisCO catalyzes two reactions: the carboxylation of D-ribulose 1,5-bisphosphate, the primary event in carbon dioxide fixation, as well as the oxidative fragmentation of the pentose substrate in the photorespiration process. Both reactions occur simultaneously and in competition at the same active site. The polypeptide is Ribulose bisphosphate carboxylase large chain (Corynocarpus laevigatus (New Zealand laurel)).